A 374-amino-acid chain; its full sequence is MSKKLFRKGILALAVSSVMGLSTHALADVVIGVAGPHTGANASFGEQYWRGASQAAEDINAAGGINGEKIKLVKADDACEPKQAVAVANRLVDQDKAIAVVGHFCSSSTIPASEVYDEAGIIAITPGSTNPQVTERGLSGMFRMCGRDDQQGVVAGDYIVNVLKAKKVAVIHDKDTYGQGLADATRAQLNKLGVKEVLYEGLTRGEKDFNALVTKIRASGAEVVYFGGLHPEAGPLVRQMREQGLTARFMSDDGVVTDELATTAGGPQYVKGVLMTFGADPRLIPDGKAVVEKFRAGGFEPEGYTLYSYASIQSLAAAFNGAGANDPAKAAEWLKSHPVQTVMGKKEWDKKGDLKVSDYVVYEWDDKGKYHQLP.

Positions 1 to 27 are cleaved as a signal peptide; the sequence is MSKKLFRKGILALAVSSVMGLSTHALA.

The protein belongs to the leucine-binding protein family.

The protein resides in the periplasm. Binds primarily proteinogenic amino acids. This is Amino acid binding protein from Pseudomonas aeruginosa (strain ATCC 15692 / DSM 22644 / CIP 104116 / JCM 14847 / LMG 12228 / 1C / PRS 101 / PAO1).